Consider the following 37-residue polypeptide: Large ribosomal subunit protein bL36 (37 aa).

Belongs to the bacterial ribosomal protein bL36 family.

The protein is Large ribosomal subunit protein bL36 of Photobacterium profundum (strain SS9).